A 259-amino-acid chain; its full sequence is Global transcriptional regulator CodY (259 aa).

The segment at 1 to 155 is GAF domain; it reads MDLLSKTRRI…GATVVGMEIL (155 aa). The H-T-H motif DNA-binding region spans 203–222; the sequence is ASKIADRVGITRSVIVNALR.

It belongs to the CodY family.

The protein resides in the cytoplasm. Functionally, DNA-binding global transcriptional regulator which is involved in the adaptive response to starvation and acts by directly or indirectly controlling the expression of numerous genes in response to nutrient availability. During rapid exponential growth, CodY is highly active and represses genes whose products allow adaptation to nutrient depletion. This is Global transcriptional regulator CodY from Brevibacillus brevis (strain 47 / JCM 6285 / NBRC 100599).